The chain runs to 820 residues: Trimethylamine-N-oxide reductase (820 aa).

A signal peptide (tat-type signal) is located at residues 1–33 (MAITRRSFLKGVATTSAASVIGPSLLASASANA). Ser179 serves as a coordination point for Mo-bis(molybdopterin guanine dinucleotide).

It belongs to the prokaryotic molybdopterin-containing oxidoreductase family. Mo-bis(molybdopterin guanine dinucleotide) is required as a cofactor. Predicted to be exported by the Tat system. The position of the signal peptide cleavage has not been experimentally proven.

It localises to the periplasm. The enzyme catalyses trimethylamine + 2 Fe(III)-[cytochrome c] + H2O = trimethylamine N-oxide + 2 Fe(II)-[cytochrome c] + 3 H(+). Functionally, reduces trimethylamine-N-oxide (TMAO) into trimethylamine; an anaerobic reaction coupled to energy-yielding reactions. This chain is Trimethylamine-N-oxide reductase (torA), found in Vibrio vulnificus (strain CMCP6).